Reading from the N-terminus, the 136-residue chain is Small ribosomal subunit protein uS8 (136 aa).

The protein belongs to the universal ribosomal protein uS8 family. As to quaternary structure, part of the 30S ribosomal subunit. Contacts proteins S5 and S12.

Functionally, one of the primary rRNA binding proteins, it binds directly to 16S rRNA central domain where it helps coordinate assembly of the platform of the 30S subunit. This is Small ribosomal subunit protein uS8 from Sulfurihydrogenibium sp. (strain YO3AOP1).